Consider the following 253-residue polypeptide: ATP synthase subunit b 2 (253 aa).

The helical transmembrane segment at 9-27 (VLEIVNFLVLVWLLKRFLY) threads the bilayer.

The protein belongs to the ATPase B chain family. As to quaternary structure, F-type ATPases have 2 components, F(1) - the catalytic core - and F(0) - the membrane proton channel. F(1) has five subunits: alpha(3), beta(3), gamma(1), delta(1), epsilon(1). F(0) has three main subunits: a(1), b(2) and c(10-14). The alpha and beta chains form an alternating ring which encloses part of the gamma chain. F(1) is attached to F(0) by a central stalk formed by the gamma and epsilon chains, while a peripheral stalk is formed by the delta and b chains.

Its subcellular location is the cell inner membrane. Its function is as follows. F(1)F(0) ATP synthase produces ATP from ADP in the presence of a proton or sodium gradient. F-type ATPases consist of two structural domains, F(1) containing the extramembraneous catalytic core and F(0) containing the membrane proton channel, linked together by a central stalk and a peripheral stalk. During catalysis, ATP synthesis in the catalytic domain of F(1) is coupled via a rotary mechanism of the central stalk subunits to proton translocation. Component of the F(0) channel, it forms part of the peripheral stalk, linking F(1) to F(0). The polypeptide is ATP synthase subunit b 2 (Methylococcus capsulatus (strain ATCC 33009 / NCIMB 11132 / Bath)).